A 277-amino-acid chain; its full sequence is F420-dependent methylenetetrahydromethanopterin dehydrogenase (277 aa).

Belongs to the MTD family.

The catalysed reaction is 5,10-methylenetetrahydromethanopterin + oxidized coenzyme F420-(gamma-L-Glu)(n) + 2 H(+) = 5,10-methenyl-5,6,7,8-tetrahydromethanopterin + reduced coenzyme F420-(gamma-L-Glu)(n). It functions in the pathway one-carbon metabolism; methanogenesis from CO(2); 5,10-methylene-5,6,7,8-tetrahydromethanopterin from 5,10-methenyl-5,6,7,8-tetrahydromethanopterin (coenzyme F420 route): step 1/1. Catalyzes the reversible reduction of methenyl-H(4)MPT(+) to methylene-H(4)MPT. The sequence is that of F420-dependent methylenetetrahydromethanopterin dehydrogenase from Methanococcus maripaludis (strain C5 / ATCC BAA-1333).